A 227-amino-acid polypeptide reads, in one-letter code: Cytochrome c oxidase subunit 2 (227 aa).

Residues 1 to 14 (MPYPLQLGLQDATS) lie on the Mitochondrial intermembrane side of the membrane. Residues 15–45 (PIMEELTHFHDHTLMIVFLISSLVLYIISSM) form a helical membrane-spanning segment. Topologically, residues 46–59 (LTTKLTHTSTMDAQ) are mitochondrial matrix. The chain crosses the membrane as a helical span at residues 60-87 (EVETIWTILPAMILILIALPSLRILYMM). Residues 88 to 227 (DEINDPSLTV…YFEDWSASLL (140 aa)) lie on the Mitochondrial intermembrane side of the membrane. Cu cation-binding residues include H161, C196, E198, C200, H204, and M207. Position 198 (E198) interacts with Mg(2+).

The protein belongs to the cytochrome c oxidase subunit 2 family. In terms of assembly, component of the cytochrome c oxidase (complex IV, CIV), a multisubunit enzyme composed of 14 subunits. The complex is composed of a catalytic core of 3 subunits MT-CO1, MT-CO2 and MT-CO3, encoded in the mitochondrial DNA, and 11 supernumerary subunits COX4I, COX5A, COX5B, COX6A, COX6B, COX6C, COX7A, COX7B, COX7C, COX8 and NDUFA4, which are encoded in the nuclear genome. The complex exists as a monomer or a dimer and forms supercomplexes (SCs) in the inner mitochondrial membrane with NADH-ubiquinone oxidoreductase (complex I, CI) and ubiquinol-cytochrome c oxidoreductase (cytochrome b-c1 complex, complex III, CIII), resulting in different assemblies (supercomplex SCI(1)III(2)IV(1) and megacomplex MCI(2)III(2)IV(2)). Found in a complex with TMEM177, COA6, COX18, COX20, SCO1 and SCO2. Interacts with TMEM177 in a COX20-dependent manner. Interacts with COX20. Interacts with COX16. It depends on Cu cation as a cofactor.

Its subcellular location is the mitochondrion inner membrane. It carries out the reaction 4 Fe(II)-[cytochrome c] + O2 + 8 H(+)(in) = 4 Fe(III)-[cytochrome c] + 2 H2O + 4 H(+)(out). Its function is as follows. Component of the cytochrome c oxidase, the last enzyme in the mitochondrial electron transport chain which drives oxidative phosphorylation. The respiratory chain contains 3 multisubunit complexes succinate dehydrogenase (complex II, CII), ubiquinol-cytochrome c oxidoreductase (cytochrome b-c1 complex, complex III, CIII) and cytochrome c oxidase (complex IV, CIV), that cooperate to transfer electrons derived from NADH and succinate to molecular oxygen, creating an electrochemical gradient over the inner membrane that drives transmembrane transport and the ATP synthase. Cytochrome c oxidase is the component of the respiratory chain that catalyzes the reduction of oxygen to water. Electrons originating from reduced cytochrome c in the intermembrane space (IMS) are transferred via the dinuclear copper A center (CU(A)) of subunit 2 and heme A of subunit 1 to the active site in subunit 1, a binuclear center (BNC) formed by heme A3 and copper B (CU(B)). The BNC reduces molecular oxygen to 2 water molecules using 4 electrons from cytochrome c in the IMS and 4 protons from the mitochondrial matrix. The polypeptide is Cytochrome c oxidase subunit 2 (MT-CO2) (Dugong dugon (Dugong)).